The sequence spans 673 residues: UvrABC system protein B (673 aa).

The Helicase ATP-binding domain maps to 26–183 (EGLEDGLAHQ…RRLAELQYAR (158 aa)). 39 to 46 (GVTGSGKT) is a binding site for ATP. The short motif at 92 to 115 (YYDYYQPEAYVPSSDTFIEKDASV) is the Beta-hairpin element. In terms of domain architecture, Helicase C-terminal spans 431–597 (QVDDLLSEIR…GLNKKVVDIL (167 aa)). Positions 608 to 627 (AKGRGKSRPIVEPDNVPMDM) are disordered. A UVR domain is found at 633-668 (QQKIHELEGLMMQHAQNLEFEEAAQIRDQLHQLRDL).

It belongs to the UvrB family. In terms of assembly, forms a heterotetramer with UvrA during the search for lesions. Interacts with UvrC in an incision complex.

The protein localises to the cytoplasm. Its function is as follows. The UvrABC repair system catalyzes the recognition and processing of DNA lesions. A damage recognition complex composed of 2 UvrA and 2 UvrB subunits scans DNA for abnormalities. Upon binding of the UvrA(2)B(2) complex to a putative damaged site, the DNA wraps around one UvrB monomer. DNA wrap is dependent on ATP binding by UvrB and probably causes local melting of the DNA helix, facilitating insertion of UvrB beta-hairpin between the DNA strands. Then UvrB probes one DNA strand for the presence of a lesion. If a lesion is found the UvrA subunits dissociate and the UvrB-DNA preincision complex is formed. This complex is subsequently bound by UvrC and the second UvrB is released. If no lesion is found, the DNA wraps around the other UvrB subunit that will check the other stand for damage. The protein is UvrABC system protein B of Escherichia coli O7:K1 (strain IAI39 / ExPEC).